A 269-amino-acid polypeptide reads, in one-letter code: tRNA pseudouridine synthase A (269 aa).

The active-site Nucleophile is the aspartate 51. Tyrosine 109 serves as a coordination point for substrate.

Belongs to the tRNA pseudouridine synthase TruA family. As to quaternary structure, homodimer.

It carries out the reaction uridine(38/39/40) in tRNA = pseudouridine(38/39/40) in tRNA. Its function is as follows. Formation of pseudouridine at positions 38, 39 and 40 in the anticodon stem and loop of transfer RNAs. This Histophilus somni (strain 2336) (Haemophilus somnus) protein is tRNA pseudouridine synthase A.